Reading from the N-terminus, the 418-residue chain is UDP-N-acetylglucosamine 1-carboxyvinyltransferase (418 aa).

Lys22–Asn23 is a phosphoenolpyruvate binding site. Arg92 provides a ligand contact to UDP-N-acetyl-alpha-D-glucosamine. The active-site Proton donor is Cys116. Cys116 is subject to 2-(S-cysteinyl)pyruvic acid O-phosphothioketal. Asp306 and Ile328 together coordinate UDP-N-acetyl-alpha-D-glucosamine.

Belongs to the EPSP synthase family. MurA subfamily.

Its subcellular location is the cytoplasm. The enzyme catalyses phosphoenolpyruvate + UDP-N-acetyl-alpha-D-glucosamine = UDP-N-acetyl-3-O-(1-carboxyvinyl)-alpha-D-glucosamine + phosphate. The protein operates within cell wall biogenesis; peptidoglycan biosynthesis. In terms of biological role, cell wall formation. Adds enolpyruvyl to UDP-N-acetylglucosamine. In Solibacter usitatus (strain Ellin6076), this protein is UDP-N-acetylglucosamine 1-carboxyvinyltransferase.